Here is a 955-residue protein sequence, read N- to C-terminus: uncharacterized protein (955 aa).

Residues 1-24 (MQSSLIKILGVLAIVATLVCFVFA) form the signal peptide. The tract at residues 127–146 (STRPGKSNLDDNGKMIPIPR) is disordered. 6 helical membrane passes run 597-617 (IKAL…LGFA), 707-727 (LGLS…IVII), 739-759 (AFMA…FLLF), 781-801 (VVLM…LDFV), 818-838 (FIGT…INWF), and 857-877 (IVAL…SGNM). Residues 905-955 (LSQVGMDEKTRKGITGRAKERLKQRNETLKQAEKTRKNAPKEEPPKAEIPK) are disordered. Basic and acidic residues predominate over residues 910–955 (MDEKTRKGITGRAKERLKQRNETLKQAEKTRKNAPKEEPPKAEIPK).

The protein belongs to the TrbL/VirB6 family.

It localises to the cell membrane. This is an uncharacterized protein from Rickettsia bellii (strain RML369-C).